We begin with the raw amino-acid sequence, 402 residues long: Tryptophan synthase beta chain 2 (402 aa).

Lys97 carries the N6-(pyridoxal phosphate)lysine modification.

This sequence belongs to the TrpB family. In terms of assembly, tetramer of two alpha and two beta chains. Requires pyridoxal 5'-phosphate as cofactor.

The enzyme catalyses (1S,2R)-1-C-(indol-3-yl)glycerol 3-phosphate + L-serine = D-glyceraldehyde 3-phosphate + L-tryptophan + H2O. It participates in amino-acid biosynthesis; L-tryptophan biosynthesis; L-tryptophan from chorismate: step 5/5. In terms of biological role, the beta subunit is responsible for the synthesis of L-tryptophan from indole and L-serine. The sequence is that of Tryptophan synthase beta chain 2 (trpB2) from Wolinella succinogenes (strain ATCC 29543 / DSM 1740 / CCUG 13145 / JCM 31913 / LMG 7466 / NCTC 11488 / FDC 602W) (Vibrio succinogenes).